The following is a 427-amino-acid chain: Serine hydroxymethyltransferase (427 aa).

(6S)-5,6,7,8-tetrahydrofolate is bound by residues leucine 118 and 122–124; that span reads GHL. Lysine 227 carries the post-translational modification N6-(pyridoxal phosphate)lysine. Residues glutamate 243 and 351–353 each bind (6S)-5,6,7,8-tetrahydrofolate; that span reads SPF.

It belongs to the SHMT family. In terms of assembly, homodimer. Pyridoxal 5'-phosphate is required as a cofactor.

The protein resides in the cytoplasm. The catalysed reaction is (6R)-5,10-methylene-5,6,7,8-tetrahydrofolate + glycine + H2O = (6S)-5,6,7,8-tetrahydrofolate + L-serine. It participates in one-carbon metabolism; tetrahydrofolate interconversion. It functions in the pathway amino-acid biosynthesis; glycine biosynthesis; glycine from L-serine: step 1/1. Functionally, catalyzes the reversible interconversion of serine and glycine with tetrahydrofolate (THF) serving as the one-carbon carrier. This reaction serves as the major source of one-carbon groups required for the biosynthesis of purines, thymidylate, methionine, and other important biomolecules. Also exhibits THF-independent aldolase activity toward beta-hydroxyamino acids, producing glycine and aldehydes, via a retro-aldol mechanism. The polypeptide is Serine hydroxymethyltransferase (Thermotoga neapolitana (strain ATCC 49049 / DSM 4359 / NBRC 107923 / NS-E)).